Here is a 1401-residue protein sequence, read N- to C-terminus: MVPATFLENMQIKKVRVEKKSRKLTVVVSSFSSNAQKLSEFQSFLEESFPSLKEIKIVVESPSLSTVEEVLENWEKVVLELSEEYPSSLSFLKTCDVAKEGQNRITVKAPTYAIYEMAKSSKLDFAIREFLRNRYELNLDVELIFSEEGEEIAEKIIEEDIKAIEEVIQKDEKSKKEKSRSEENRVLLGKEMKAKPISIKDVSAETDEVVIEGEIFSIDFKELKSKVLMVFDITDYTSSILVKTFLTEEKYEILKDEIDVGTFVRLRGNVIYDKYEGDLVIDLKDLELIPPKKRMDLSEEKRVELHLHTQMSTLDAVPSATEVIKRAAEWGHKAVAITDHAVVQAFPEAMEASREYGVKVIYGMEGYMVDDGIPIVTGESEASLEGEFVVFDIETTGLSNINDEIIEIGAVKIKNKKIVDTFETFVNPQIPISSFITKLTGIDESMVKDAPLIEEVLPKFLEFAKGAVLVAHNANFDVSFIKSKAKKLGLTVENTVLDTLELSRHLYQDLKNYKLDTLAEFFEVKLLHHHRAVEDAKATAEIFIKMLEKLQEIGIKSVSEINSVLMEREVDVKKLPVYHVTILVKDQKGLRNLYEIISRSNLEFFHRTPRIPKSLLVKMREGLIIGSACEQGEVFRALVSNLEEKKLEDIINFYDYLEIQPVGNNEFLIERGEVRSVEELKEINRKIYELGKKYNKLVVATGDVHFLDPWDDVYRKILMAGKGYKDADRQPPLYFRTTEEMLMEFEYLGEEAAREVVIENPNKIAEIVEDVKPIPEGTFPPVIEGAEEELRRITLEKAHEIYGDPLPPIVQERLDRELNAIINNGYAVMYVIAQKLVSKSLQDGYLVGSRGSVGSSLVATMSGITEVNPLPPHYVCPKCKHSEFVTDGSFGCGVDMPDKYCPNCGTLMKKDGFDIPFEVFMGFEGDKEPDIDLNFSGEYQPIAHRYTEELFGKGHVFRAGTIGTLADKTAYGYVKKYFEERNLTVHKSEIKRLTMGCTGIKRTTGQHPGGVMVVPKDKSIYDFTPIQRPADAEDTDVITTHFDYHSLSGKLLKLDILGHDDPTVIRMLEDLTGVNARKIPLDDKKTMSLFTSVEALGIDPEELGTPVGTLGLPEFGTKFVRQMLIETRPTTFDELVRISGLSHGTDVWLNNAQDIIREGIATLKEVIAARDDIMLYLISKGMDKKLSFKIMENVRKGKGVTQEEIEEMKKHGVPDWFIQSCQKIKYMFPKAHAVAYVIMAFRIAYFKVYYPEAFYATYFTVRADDFNLDIVLGGKESIKRAIKEIEAKGNNATPKEKNLLTVLEVALEMYLRGIKFTNVDLYRSDAEKFLITEEGLLPPLNSLEGVGIQAAKAIAQERENGKFISIEDFRNRTRVSKTVIEILKQYGCLEDLPESNQLSLF.

Positions 388–543 (FVVFDIETTG…EDAKATAEIF (156 aa)) constitute an Exonuclease domain.

The protein belongs to the DNA polymerase type-C family. PolC subfamily.

The protein localises to the cytoplasm. The catalysed reaction is DNA(n) + a 2'-deoxyribonucleoside 5'-triphosphate = DNA(n+1) + diphosphate. Functionally, required for replicative DNA synthesis. This DNA polymerase also exhibits 3' to 5' exonuclease activity. This chain is DNA polymerase III PolC-type, found in Caldanaerobacter subterraneus subsp. tengcongensis (strain DSM 15242 / JCM 11007 / NBRC 100824 / MB4) (Thermoanaerobacter tengcongensis).